A 537-amino-acid polypeptide reads, in one-letter code: MTETGVRNGAYGADKFGLKNLAGVTWNPGAPQLYEYALRAGEGVLSADGALCVDTGIFTGRSPKDKYTVRDANTESTVWWGGNQSITAEQFETLYQDFLKHAEGMQLFAQDLYGGADPSFQIKTRVFTEMAWHSLFIRTLLRRPETAALASFVPELTIIDLASFRADPKRHGCQSENVVAIDFTRKIVLIGGTQYAGEMKKSVFTTLNYYLPDKGVLPMHCSANVGPDGDTAIFFGLSGTGKTTLSADPNRTLIGDDEHGWGKDGVFNFEGGCYAKCIKLSAEAEPEIFAASNRFGAILENTVLDPITRKPDFNDGSKTENTRSAYPLESIPNASLTGRAGLPKNVVMLAADAFGVMPPIAKLTPAQAMYHFLSGYTAKVAGTERGVTEPSPVFSTCFGSPFLPRDPSVYGNMLRELIAKHGVDCWLVNTGWTGGIYGTGSRMPIKVTRALLTAALNGSLRNVEFRTDPYFGFAVPTALPGVPSDILDPVKTWADKAAFDVTARKLVGMFQKNFSKFEAMVDAEVRAAQPEAKLAAE.

Substrate contacts are provided by Arg-61, Tyr-195, and Lys-201. ATP is bound by residues Lys-201, His-220, and 236–244; that span reads GLSGTGKTT. Mn(2+)-binding residues include Lys-201 and His-220. Asp-257 contacts Mn(2+). ATP-binding residues include Glu-285, Arg-323, and Thr-448. Arg-323 provides a ligand contact to substrate.

The protein belongs to the phosphoenolpyruvate carboxykinase (ATP) family. Mn(2+) serves as cofactor.

It is found in the cytoplasm. The enzyme catalyses oxaloacetate + ATP = phosphoenolpyruvate + ADP + CO2. It participates in carbohydrate biosynthesis; gluconeogenesis. In terms of biological role, involved in the gluconeogenesis. Catalyzes the conversion of oxaloacetate (OAA) to phosphoenolpyruvate (PEP) through direct phosphoryl transfer between the nucleoside triphosphate and OAA. The polypeptide is Phosphoenolpyruvate carboxykinase (ATP) (Rhodopseudomonas palustris (strain BisA53)).